The chain runs to 2350 residues: Probable JmjC domain-containing histone demethylation protein 2C (2350 aa).

2 disordered regions span residues 96–302 (TRAQ…LQEC) and 314–336 (PKDR…NDTH). The segment covering 98 to 127 (AQANSPRPAMNSQAAVPKQNTHQQQQQRSI) has biased composition (polar residues). Ser-135 and Ser-138 each carry phosphoserine. A compositionally biased stretch (basic and acidic residues) spans 141–160 (DEEKMKEDKYDCVSRGENPK). The segment covering 161 to 171 (GKNKHVVTKRR) has biased composition (basic residues). A compositionally biased stretch (basic and acidic residues) spans 172 to 189 (KPEEAEKRLSMKRLRTDN). Positions 190 to 200 (ASDASESSDAE) are enriched in low complexity. Phosphoserine is present on residues Ser-191 and Ser-194. Basic and acidic residues predominate over residues 257-280 (QEDKNHNEGEKPKSTDSHLQDKMT). Residues 281 to 302 (LRSSEQATVADHNSNDSVLQEC) are compositionally biased toward polar residues. Phosphoserine occurs at positions 294 and 320. A Phosphothreonine modification is found at Thr-324. Residues Ser-420, Ser-436, Ser-457, Ser-458, Ser-460, Ser-471, and Ser-762 each carry the phosphoserine modification. Disordered regions lie at residues 426–486 (SVTE…NSQA), 747–766 (SSAE…PPLT), 859–883 (RENY…DKDV), 1030–1083 (RKES…DQSL), and 1422–1508 (EKVS…VPRS). 2 stretches are compositionally biased toward low complexity: residues 863 to 874 (SRVVPSSSSPKS) and 1034 to 1045 (SYSSLSPPTLTP). Positions 1071-1083 (SQSNFKNSSDQSL) are enriched in polar residues. The segment covering 1454–1463 (KRQPKPTYKK) has biased composition (basic residues). The segment covering 1464–1480 (KQNDLQKRKGEVEEDSK) has biased composition (basic and acidic residues). Residues 1657–1682 (CDACEATLFNVHWVCRKCGFVACLDC) form a C6-type zinc finger. The segment covering 1776–1818 (KTSVSLPESQQQNSPQKSQTNGNSSPGSASTDSRLTPPESQSP) has biased composition (polar residues). The interval 1776 to 1874 (KTSVSLPESQ…PASQSNEQGS (99 aa)) is disordered. The residue at position 1800 (Ser-1800) is a Phosphoserine. Positions 1826–1849 (AEQKSREEKQENKEFTLEREIKED) are enriched in basic and acidic residues. Positions 1855–1874 (SDSPNGSTSPPASQSNEQGS) are enriched in polar residues. The short motif at 1876 to 1880 (LRDLL) is the LXXLL motif element. Residues 1933–1962 (PNKTSKINIKSEPNEEPKESSLPATDESNK) are disordered. Lys-1942 participates in a covalent cross-link: Glycyl lysine isopeptide (Lys-Gly) (interchain with G-Cter in SUMO2). Positions 2084–2308 (MPTRYEDFLR…QSFHLTQELR (225 aa)) constitute a JmjC domain. The Fe cation site is built by His-2146, Glu-2148, and His-2276.

This sequence belongs to the JHDM2 histone demethylase family. Fe(2+) serves as cofactor.

It localises to the nucleus. Its function is as follows. Probable histone demethylase that specifically demethylates 'Lys-9' of histone H3, thereby playing a central role in histone code. Demethylation of Lys residue generates formaldehyde and succinate. May be involved in hormone-dependent transcriptional activation, by participating in recruitment to androgen-receptor target genes. The protein is Probable JmjC domain-containing histone demethylation protein 2C (Jmjd1c) of Mus musculus (Mouse).